Here is a 211-residue protein sequence, read N- to C-terminus: Ribonuclease HII (211 aa).

An RNase H type-2 domain is found at 24 to 211 (QLIAGVDEVG…KPVKKALGLD (188 aa)). Asp-30, Glu-31, and Asp-122 together coordinate a divalent metal cation.

The protein belongs to the RNase HII family. Mn(2+) is required as a cofactor. Mg(2+) serves as cofactor.

It localises to the cytoplasm. The catalysed reaction is Endonucleolytic cleavage to 5'-phosphomonoester.. Its function is as follows. Endonuclease that specifically degrades the RNA of RNA-DNA hybrids. In Vibrio parahaemolyticus serotype O3:K6 (strain RIMD 2210633), this protein is Ribonuclease HII.